The following is a 223-amino-acid chain: tRNA (guanine-N(7)-)-methyltransferase (223 aa).

Asp-56, Asp-81, Asp-108, and Asp-130 together coordinate S-adenosyl-L-methionine. Residue Asp-130 is part of the active site. Positions 134 and 166 each coordinate substrate.

Belongs to the class I-like SAM-binding methyltransferase superfamily. TrmB family.

The enzyme catalyses guanosine(46) in tRNA + S-adenosyl-L-methionine = N(7)-methylguanosine(46) in tRNA + S-adenosyl-L-homocysteine. It participates in tRNA modification; N(7)-methylguanine-tRNA biosynthesis. Functionally, catalyzes the formation of N(7)-methylguanine at position 46 (m7G46) in tRNA. This is tRNA (guanine-N(7)-)-methyltransferase from Rubrobacter xylanophilus (strain DSM 9941 / JCM 11954 / NBRC 16129 / PRD-1).